The sequence spans 313 residues: Olfactory receptor 1G1 (313 aa).

The Extracellular portion of the chain corresponds to 1 to 25 (MEGKNLTSISEFFLLGFSEQLEEQK). N-linked (GlcNAc...) asparagine glycosylation is present at N5. Residues 26-49 (ALFGSFLFMYLVMVAGNLLIILVI) form a helical membrane-spanning segment. Residues 50 to 57 (ITDTQLHT) are Cytoplasmic-facing. A helical transmembrane segment spans residues 58 to 79 (PMYFFLANLSLADACFVSTTVP). Over 80 to 100 (KMLANIQIQSQAISYSGCLLQ) the chain is Extracellular. A disulfide bridge connects residues C97 and C189. A helical membrane pass occupies residues 101-120 (LYFFMLFVMLEAFLLAVMAY). Residues 121–140 (DHYVAICHPLHYILIMSPGL) lie on the Cytoplasmic side of the membrane. Residues 141–158 (CVFLVSASWIMNALYSLL) form a helical membrane-spanning segment. Topologically, residues 159 to 196 (HTLLMNSLSFCANHEIPHFFCDIDPLLSLSCADPFTNE) are extracellular. The helical transmembrane segment at 197–219 (LVIFITGGLTGLICVLCLIISYT) threads the bilayer. The Cytoplasmic segment spans residues 220–236 (NVFSTILKIPSAQGKRK). Residues 237-259 (AFSTCSSHLSVVSLFXGTSFCVY) traverse the membrane as a helical segment. The Extracellular segment spans residues 260–272 (FSPPSTRXAQKDT). The chain crosses the membrane as a helical span at residues 273–292 (VASVMYTVVTPMLNPFIYSL). Topologically, residues 293-313 (RNQEIKSSLRKLIWVRKIHSP) are cytoplasmic.

The protein belongs to the G-protein coupled receptor 1 family.

It is found in the cell membrane. Functionally, odorant receptor. This is Olfactory receptor 1G1 (OR1G1) from Pan troglodytes (Chimpanzee).